We begin with the raw amino-acid sequence, 305 residues long: tRNA dimethylallyltransferase (305 aa).

An ATP-binding site is contributed by 8 to 15; that stretch reads GPTAVGKT. 10-15 provides a ligand contact to substrate; that stretch reads TAVGKT. Positions 33–36 are interaction with substrate tRNA; that stretch reads DSRQ.

Belongs to the IPP transferase family. In terms of assembly, monomer. Mg(2+) serves as cofactor.

The catalysed reaction is adenosine(37) in tRNA + dimethylallyl diphosphate = N(6)-dimethylallyladenosine(37) in tRNA + diphosphate. Its function is as follows. Catalyzes the transfer of a dimethylallyl group onto the adenine at position 37 in tRNAs that read codons beginning with uridine, leading to the formation of N6-(dimethylallyl)adenosine (i(6)A). The polypeptide is tRNA dimethylallyltransferase (Thermotoga maritima (strain ATCC 43589 / DSM 3109 / JCM 10099 / NBRC 100826 / MSB8)).